The primary structure comprises 551 residues: Thermophilic beta-amylase (551 aa).

The signal sequence occupies residues 1–32; sequence MIGAFKRLGQKLFLTLLTASLIFASSIVTANA. A substrate-binding site is contributed by Asp73. Glu80 lines the Ca(2+) pocket. Substrate is bound by residues His113 and Asp121. Glu167 is a binding site for Ca(2+). Glu195 serves as the catalytic Proton donor. Residues Lys310, His315, and Thr353 each contribute to the substrate site. Residue Glu392 is the Proton acceptor of the active site. Substrate is bound by residues 393–394 and Arg423; that span reads NA. The CBM20 domain occupies 448–551; it reads LTPNGTIPVT…TGSVTITWQN (104 aa).

It belongs to the glycosyl hydrolase 14 family. In terms of assembly, monomer. It depends on Ca(2+) as a cofactor.

It catalyses the reaction Hydrolysis of (1-&gt;4)-alpha-D-glucosidic linkages in polysaccharides so as to remove successive maltose units from the non-reducing ends of the chains.. In Thermoanaerobacterium thermosulfurigenes (Clostridium thermosulfurogenes), this protein is Thermophilic beta-amylase.